The sequence spans 495 residues: GTPase Der (495 aa).

EngA-type G domains lie at 3 to 166 (PVVA…VQDE) and 208 to 381 (IKLA…ACAT). GTP is bound by residues 9 to 16 (GRPNVGKS), 56 to 60 (DTGGI), 118 to 121 (NKTD), 214 to 221 (GRPNVGKS), 261 to 265 (DTAGV), and 326 to 329 (NKWD). The KH-like domain maps to 382-466 (RRVSTAMLTR…PIRIQFKEGE (85 aa)).

It belongs to the TRAFAC class TrmE-Era-EngA-EngB-Septin-like GTPase superfamily. EngA (Der) GTPase family. Associates with the 50S ribosomal subunit.

In terms of biological role, GTPase that plays an essential role in the late steps of ribosome biogenesis. The protein is GTPase Der of Pectobacterium carotovorum subsp. carotovorum (strain PC1).